We begin with the raw amino-acid sequence, 98 residues long: NADH-ubiquinone oxidoreductase chain 4L (98 aa).

Transmembrane regions (helical) follow at residues 1–21, 29–49, and 61–81; these read MSLT…GLLM, SLLC…MTIL, and IILL…LVMV.

It belongs to the complex I subunit 4L family. Core subunit of respiratory chain NADH dehydrogenase (Complex I) which is composed of 45 different subunits.

Its subcellular location is the mitochondrion inner membrane. The enzyme catalyses a ubiquinone + NADH + 5 H(+)(in) = a ubiquinol + NAD(+) + 4 H(+)(out). In terms of biological role, core subunit of the mitochondrial membrane respiratory chain NADH dehydrogenase (Complex I) which catalyzes electron transfer from NADH through the respiratory chain, using ubiquinone as an electron acceptor. Part of the enzyme membrane arm which is embedded in the lipid bilayer and involved in proton translocation. The sequence is that of NADH-ubiquinone oxidoreductase chain 4L (MT-ND4L) from Chiroderma trinitatum (Little big-eyed bat).